A 1121-amino-acid chain; its full sequence is PR domain zinc finger protein 10 (1121 aa).

Disordered regions lie at residues 1-24 and 92-125; these read MEAK…NTPQ and TEAS…MDDW. Acidic residues predominate over residues 106–124; sequence VDSEDEEEDNDSEDSEMDD. In terms of domain architecture, SET spans 173–290; that stretch reads LPLVLYIDRF…PKQELKVWYA (118 aa). The segment at 192-295 is N-terminal PR domain; essential for transcriptional activation; that stretch reads IPKRTQFGPL…KVWYAASYAE (104 aa). The C2H2-type 1 zinc finger occupies 319–341; that stretch reads WPCYECNRRFMSSEQLQQHLNMH. 2 disordered regions span residues 350–387 and 419–473; these read RPKS…SADK and ESME…PHLT. The span at 351–374 shows a compositional bias: basic residues; that stretch reads PKSRGRGRGRKRFGGARRPGRRTK. 9 C2H2-type zinc fingers span residues 500 to 522, 529 to 551, 557 to 579, 585 to 608, 613 to 635, 641 to 664, 696 to 719, 741 to 764, and 803 to 826; these read FKCP…MRFH, HVCH…LVLH, YSCL…VGIH, FLCP…RSFH, FQCS…MLRH, FLCS…QRMH, FKCR…SKRH, YYCQ…LKNH, and VCCP…RKKH. A C-terminal glutamine-rich region; essential for transcriptional activation region spans residues 871 to 1101; the sequence is QAMTELSQTL…PAGGQQATTQ (231 aa). Positions 1077 to 1097 are disordered; the sequence is VPSTATQGHPDPLEQPAGGQQ.

It belongs to the class V-like SAM-binding methyltransferase superfamily.

Its subcellular location is the nucleus. Transcriptional activator, essential for early embryonic development and survival of embryonic stem cells (ESCs). Supports cell growth and survival during early development by transcriptionally activating the expression of the translation initiation factor EIF3B, to sustain global translation. Activates the transcription of FLNC. The sequence is that of PR domain zinc finger protein 10 (prdm10) from Danio rerio (Zebrafish).